The chain runs to 559 residues: Neutral amino acid transporter 9 (559 aa).

At 1-118 the chain is on the cytoplasmic side; the sequence is MANVDSDSRH…YTEGYRKNTS (118 aa). A helical membrane pass occupies residues 119–139; sequence LVTIFMIWNTMMGTSILSIPW. The interval 128–133 is important for arginine binding and amino acid transport; that stretch reads TMMGTS. Serine 133 lines the arginine pocket. The Lumenal portion of the chain corresponds to 140 to 145; sequence GIKQAG. A helical membrane pass occupies residues 146–166; the sequence is FTTGMCVIVLMGLLTLYCCYR. Topologically, residues 167–197 are cytoplasmic; sequence VVKSRSMIVTSDTTTWEYPDVCKHYFGSFGQ. Residues 198–224 form a helical membrane-spanning segment; the sequence is WSSLLFSLVSLIGAMIVYWVLMSNFLF. Residues 225-281 lie on the Lumenal side of the membrane; it reads NTGKFIFNFIHHINDTDTVLSTNNSSPVICPSAGSGHPDNSSMIFYNSDTEVRLFER. N-linked (GlcNAc...) asparagine glycans are attached at residues asparagine 238, asparagine 247, and asparagine 264. Cysteines 254 and 422 form a disulfide. A helical membrane pass occupies residues 282-298; it reads WWDKSKTVPFYLIGLLL. Residues 299–307 lie on the Cytoplasmic side of the membrane; the sequence is PLLNFKSPS. Residues 308-332 traverse the membrane as a helical segment; that stretch reads FFSKFNILGTVSVLYLIFIVTLKAI. The Lumenal portion of the chain corresponds to 333–354; the sequence is RLGFHLEFHWFAPTEFFVPEIR. Residues 355–375 form a helical membrane-spanning segment; the sequence is AQFPQLTGVLTLAFFIHNCII. Residues 376-392 lie on the Cytoplasmic side of the membrane; the sequence is TLLKNNKNQENNVRDLC. Residues 393–413 form a helical membrane-spanning segment; the sequence is IAYMLVTLTYLYIGVLVFASF. Topologically, residues 414–435 are lumenal; it reads PSPPLPKDCIEQNFLDNFPSSD. The helical transmembrane segment at 436 to 456 threads the bilayer; sequence TLSFIARICLLFQMMTVYPLL. The short motif at 442–452 is the CARC motif element; it reads RICLLFQMMTV. The CRAC motif motif lies at 455 to 461; sequence LLGYLAR. The Cytoplasmic portion of the chain corresponds to 457-477; it reads GYLARVQLLGHIFGDIYPSIF. Residues 478-498 traverse the membrane as a helical segment; the sequence is HVLILNLIIVGAGVTMACFYP. The Lumenal portion of the chain corresponds to 499 to 505; sequence NIGGIIR. The helical transmembrane segment at 506 to 526 threads the bilayer; the sequence is YSGAACGLAFVFIYPSLIYIL. Topologically, residues 527–538 are cytoplasmic; the sequence is SQHQEERLTWPK. The helical transmembrane segment at 539-559 threads the bilayer; that stretch reads LVFHIIIIILGLANLIAQFFM.

It belongs to the amino acid/polyamine transporter 2 family. SLC38A9 subfamily. In terms of assembly, associated component of the Ragulator complex (composed of LAMTOR1, LAMTOR2, LAMTOR3, LAMTOR4 and LAMTOR5). Associated component of the Rag GTPases heterodimers (composed of RRAGA, RRAGB, RRAGC and RRAGD); this interaction is independent of the Ragulator complex but depends on the nucleotide loading state of the Rag GTPase heterodimer. Interacts with TM4SF5. Interacts with NPC1; this interaction inhibits cholesterol-mediated mTORC1 activation via its sterol transport activity. Glycosylated.

Its subcellular location is the lysosome membrane. It is found in the late endosome membrane. It carries out the reaction L-leucine(in) = L-leucine(out). The catalysed reaction is L-tyrosine(in) = L-tyrosine(out). The enzyme catalyses L-glutamine(out) = L-glutamine(in). It catalyses the reaction L-asparagine(out) = L-asparagine(in). In terms of biological role, lysosomal amino acid transporter involved in the activation of mTORC1 in response to amino acid levels. Probably acts as an amino acid sensor of the Rag GTPases and Ragulator complexes, 2 complexes involved in amino acid sensing and activation of mTORC1, a signaling complex promoting cell growth in response to growth factors, energy levels, and amino acids. Following activation by amino acids, the Ragulator and Rag GTPases function as a scaffold recruiting mTORC1 to lysosomes where it is in turn activated. SLC38A9 mediates transport of amino acids with low capacity and specificity with a slight preference for polar amino acids. Acts as an arginine sensor. Following activation by arginine binding, mediates transport of L-glutamine, leucine and tyrosine with high efficiency, and is required for the efficient utilization of these amino acids after lysosomal protein degradation. However, the transport mechanism is not well defined and the role of sodium is not clear. Can disassemble the lysosomal folliculin complex (LFC), and thereby triggers GAP activity of FLCN:FNIP2 toward RRAGC. Acts as an cholesterol sensor that conveys increases in lysosomal cholesterol, leading to lysosomal recruitment and activation of mTORC1 via the Rag GTPases. Guanine exchange factor (GEF) that, upon arginine binding, stimulates GDP release from RRAGA and therefore activates the Rag GTPase heterodimer and the mTORC1 pathway in response to nutrient sufficiency. This Rattus norvegicus (Rat) protein is Neutral amino acid transporter 9.